Consider the following 446-residue polypeptide: tRNA wybutosine-synthesizing protein 2 homolog (446 aa).

S-adenosyl-L-methionine-binding positions include serine 208, lysine 215, glutamate 255, and 283-284 (DN).

This sequence belongs to the class I-like SAM-binding methyltransferase superfamily. TRM5/TYW2 family.

It carries out the reaction 4-demethylwyosine(37) in tRNA(Phe) + S-adenosyl-L-methionine = 4-demethyl-7-[(3S)-3-amino-3-carboxypropyl]wyosine(37) in tRNA(Phe) + S-methyl-5'-thioadenosine + H(+). It participates in tRNA modification; wybutosine-tRNA(Phe) biosynthesis. In terms of biological role, S-adenosyl-L-methionine-dependent transferase that acts as a component of the wybutosine biosynthesis pathway. Wybutosine is a hyper modified guanosine with a tricyclic base found at the 3'-position adjacent to the anticodon of eukaryotic phenylalanine tRNA. Catalyzes the transfer of the alpha-amino-alpha-carboxypropyl (acp) group from S-adenosyl-L-methionine to the C-7 position of 4-demethylwyosine (imG-14) to produce wybutosine-86. This Mus musculus (Mouse) protein is tRNA wybutosine-synthesizing protein 2 homolog (Trmt12).